A 273-amino-acid chain; its full sequence is MNAIFVANKPTGLSSNQFLNRLKRKYGVKKAGFSGTLDPFASGCLIVAFGSYTKFFRFLDKTPKIYEATMWIGASSPSGDNENITDVKILKPFADESLEIARKSLLGRLKYIPPKFSAKNINGTRAYKLARTGEEFSLKEQEMEVFSCEILSYRHPFLTFRISLSEGGYVRSYAQLFGKRLGYDVCLSELKRISEGKFRFENEKFLNICEILNLPRNKYLGDVADIMDGKSLKPSDFTTQKDGIYLLEYDKFLSIIEIKNDTISYCLNKVEKC.

The active-site Nucleophile is the Asp-38.

Belongs to the pseudouridine synthase TruB family. Type 1 subfamily.

It carries out the reaction uridine(55) in tRNA = pseudouridine(55) in tRNA. Responsible for synthesis of pseudouridine from uracil-55 in the psi GC loop of transfer RNAs. This is tRNA pseudouridine synthase B from Campylobacter curvus (strain 525.92).